The primary structure comprises 321 residues: Aspartate carbamoyltransferase catalytic subunit (321 aa).

Arg-57 and Thr-58 together coordinate carbamoyl phosphate. Residue Lys-85 coordinates L-aspartate. 3 residues coordinate carbamoyl phosphate: Arg-107, His-142, and Gln-145. L-aspartate contacts are provided by Arg-175 and Arg-229. Positions 270 and 271 each coordinate carbamoyl phosphate.

This sequence belongs to the aspartate/ornithine carbamoyltransferase superfamily. ATCase family. As to quaternary structure, heterododecamer (2C3:3R2) of six catalytic PyrB chains organized as two trimers (C3), and six regulatory PyrI chains organized as three dimers (R2).

The catalysed reaction is carbamoyl phosphate + L-aspartate = N-carbamoyl-L-aspartate + phosphate + H(+). It functions in the pathway pyrimidine metabolism; UMP biosynthesis via de novo pathway; (S)-dihydroorotate from bicarbonate: step 2/3. Functionally, catalyzes the condensation of carbamoyl phosphate and aspartate to form carbamoyl aspartate and inorganic phosphate, the committed step in the de novo pyrimidine nucleotide biosynthesis pathway. This Mycobacterium leprae (strain TN) protein is Aspartate carbamoyltransferase catalytic subunit.